The sequence spans 557 residues: Urocanate hydratase (557 aa).

NAD(+)-binding positions include 53 to 54 (GG), glutamine 131, 177 to 179 (GMG), glutamate 197, arginine 202, 243 to 244 (NA), 264 to 268 (QTSAH), 274 to 275 (YL), and tyrosine 323. Residue cysteine 411 is part of the active site. Residue glycine 493 coordinates NAD(+).

The protein belongs to the urocanase family. It depends on NAD(+) as a cofactor.

The protein localises to the cytoplasm. The catalysed reaction is 4-imidazolone-5-propanoate = trans-urocanate + H2O. The protein operates within amino-acid degradation; L-histidine degradation into L-glutamate; N-formimidoyl-L-glutamate from L-histidine: step 2/3. Functionally, catalyzes the conversion of urocanate to 4-imidazolone-5-propionate. This Pseudomonas putida (strain ATCC 700007 / DSM 6899 / JCM 31910 / BCRC 17059 / LMG 24140 / F1) protein is Urocanate hydratase.